We begin with the raw amino-acid sequence, 747 residues long: Threonine synthase-like 1 (747 aa).

The residue at position 351 (Lys351) is an N6-(pyridoxal phosphate)lysine.

This sequence belongs to the threonine synthase family. Requires pyridoxal 5'-phosphate as cofactor.

The protein is Threonine synthase-like 1 (Thnsl1) of Mus musculus (Mouse).